Consider the following 156-residue polypeptide: Small ribosomal subunit protein uS7 (156 aa).

This sequence belongs to the universal ribosomal protein uS7 family. In terms of assembly, part of the 30S ribosomal subunit. Contacts proteins S9 and S11.

In terms of biological role, one of the primary rRNA binding proteins, it binds directly to 16S rRNA where it nucleates assembly of the head domain of the 30S subunit. Is located at the subunit interface close to the decoding center, probably blocks exit of the E-site tRNA. This is Small ribosomal subunit protein uS7 from Cronobacter sakazakii (strain ATCC BAA-894) (Enterobacter sakazakii).